The following is a 175-amino-acid chain: RNA pyrophosphohydrolase (175 aa).

In terms of domain architecture, Nudix hydrolase spans 6–149 (GYRPNVGIVI…KRDVYRRVMK (144 aa)). The short motif at 38–59 (GGINPGETPEQAMYRELFEEVG) is the Nudix box element.

It belongs to the Nudix hydrolase family. RppH subfamily. Requires a divalent metal cation as cofactor.

Accelerates the degradation of transcripts by removing pyrophosphate from the 5'-end of triphosphorylated RNA, leading to a more labile monophosphorylated state that can stimulate subsequent ribonuclease cleavage. The sequence is that of RNA pyrophosphohydrolase from Yersinia enterocolitica serotype O:8 / biotype 1B (strain NCTC 13174 / 8081).